A 240-amino-acid chain; its full sequence is Urease accessory protein UreD (240 aa).

This sequence belongs to the UreD family. In terms of assembly, ureD, UreF and UreG form a complex that acts as a GTP-hydrolysis-dependent molecular chaperone, activating the urease apoprotein by helping to assemble the nickel containing metallocenter of UreC. The UreE protein probably delivers the nickel.

It localises to the cytoplasm. Its function is as follows. Required for maturation of urease via the functional incorporation of the urease nickel metallocenter. This is Urease accessory protein UreD from Granulibacter bethesdensis (strain ATCC BAA-1260 / CGDNIH1).